Reading from the N-terminus, the 452-residue chain is Tryptophan biosynthesis protein TrpCF (452 aa).

The interval methionine 1–glutamate 256 is indole-3-glycerol phosphate synthase. The N-(5'-phosphoribosyl)anthranilate isomerase stretch occupies residues asparagine 257–tyrosine 452.

This sequence in the N-terminal section; belongs to the TrpC family. It in the C-terminal section; belongs to the TrpF family. Monomer.

The catalysed reaction is N-(5-phospho-beta-D-ribosyl)anthranilate = 1-(2-carboxyphenylamino)-1-deoxy-D-ribulose 5-phosphate. The enzyme catalyses 1-(2-carboxyphenylamino)-1-deoxy-D-ribulose 5-phosphate + H(+) = (1S,2R)-1-C-(indol-3-yl)glycerol 3-phosphate + CO2 + H2O. Its pathway is amino-acid biosynthesis; L-tryptophan biosynthesis; L-tryptophan from chorismate: step 3/5. It functions in the pathway amino-acid biosynthesis; L-tryptophan biosynthesis; L-tryptophan from chorismate: step 4/5. Its function is as follows. Bifunctional enzyme that catalyzes two sequential steps of tryptophan biosynthetic pathway. The first reaction is catalyzed by the isomerase, coded by the TrpF domain; the second reaction is catalyzed by the synthase, coded by the TrpC domain. This Salmonella typhimurium (strain LT2 / SGSC1412 / ATCC 700720) protein is Tryptophan biosynthesis protein TrpCF (trpC).